We begin with the raw amino-acid sequence, 516 residues long: D-aminopeptidase (516 aa).

Serine 61 acts as the Nucleophile in catalysis. The Proton donor/acceptor role is filled by lysine 64. The important for specificity stretch occupies residues 476–486; sequence RRSMDAPAPGD. Aspartate 480 is a binding site for substrate.

This sequence belongs to the peptidase S12 family. As to quaternary structure, homodimer.

It catalyses the reaction Release of an N-terminal D-amino acid from a peptide, Xaa-|-Yaa-, in which Xaa is preferably D-Ala, D-Ser or D-Thr. D-amino acid amides and methyl esters also are hydrolyzed, as is glycine amide.. Its activity is regulated as follows. Inhibited by beta-lactam compounds such as 6-aminopenicillic acid, 7-aminocephalosporanic acid, benzylpenicillin and ampicillin. Inhibited by p-chloromercuribenzoate. Functionally, hydrolyzes N-terminal residues in D-amino acid-containing peptides. This chain is D-aminopeptidase, found in Cereibacter sphaeroides (strain ATCC 17029 / ATH 2.4.9) (Rhodobacter sphaeroides).